A 445-amino-acid chain; its full sequence is MKYSAEEIIEVYQMLNEEDLDIRSVTLSINTLFAISDDLDKSLKKLEEINNFLERFSKIVDEVGSKYGIRIVTKRVSVSPIQFFLEVLDEKDGIELAKYLDRIAERNNIDYISGYSAFADKGFTRGSLRVLKTLTDALNKTKRLAGMINAASTMSGMNIDAIKIFVDRIFEIPPESSSRTAIMSNVPPDSPFVPSAHHGMGMPEATINVAVSGPGVIKAAIERSKPKTLQELHDIIKRAAFKITRLGELVGRTVAENMGINFTTVDLSLAPSPKVGDSVAEIIETMGIEKIGGHGSLAALAILMDAVKKGGAMATSSVGGLSSAFIPVSEDAVMSERSLEGYIDFYTLIALSSVCNSGIDMVGVSKSQGKDKVIGLISDILALGISLNKILGARIIPIDSPPGSYIDLGGLLGKIVVMKLKDVNVSKFTSYRGFIPSTVKRLELG.

The protein belongs to the UPF0210 family.

The polypeptide is UPF0210 protein STK_02450 (Sulfurisphaera tokodaii (strain DSM 16993 / JCM 10545 / NBRC 100140 / 7) (Sulfolobus tokodaii)).